The chain runs to 375 residues: Coproporphyrin III ferrochelatase (375 aa).

Fe-coproporphyrin III contacts are provided by serine 59 and tyrosine 128. Histidine 191 and glutamate 286 together coordinate Fe(2+).

It belongs to the ferrochelatase family.

The protein resides in the cytoplasm. It catalyses the reaction Fe-coproporphyrin III + 2 H(+) = coproporphyrin III + Fe(2+). It participates in porphyrin-containing compound metabolism; protoheme biosynthesis. Functionally, involved in coproporphyrin-dependent heme b biosynthesis. Catalyzes the insertion of ferrous iron into coproporphyrin III to form Fe-coproporphyrin III. The polypeptide is Coproporphyrin III ferrochelatase (Streptomyces griseus subsp. griseus (strain JCM 4626 / CBS 651.72 / NBRC 13350 / KCC S-0626 / ISP 5235)).